The sequence spans 112 residues: Nucleoid-associated protein Pfl01_1806 (112 aa).

It belongs to the YbaB/EbfC family. Homodimer.

Its subcellular location is the cytoplasm. It is found in the nucleoid. In terms of biological role, binds to DNA and alters its conformation. May be involved in regulation of gene expression, nucleoid organization and DNA protection. The polypeptide is Nucleoid-associated protein Pfl01_1806 (Pseudomonas fluorescens (strain Pf0-1)).